A 56-amino-acid chain; its full sequence is Protein YqiD (56 aa).

A helical membrane pass occupies residues 2 to 22 (FIAWYWIVLIALVVVGYFLHL).

It is found in the cell inner membrane. The sequence is that of Protein YqiD from Escherichia coli (strain K12).